A 181-amino-acid chain; its full sequence is ATP-dependent protease subunit HslV (181 aa).

The active site involves Thr7. Na(+) is bound by residues Ala166, Cys169, and Thr172.

It belongs to the peptidase T1B family. HslV subfamily. A double ring-shaped homohexamer of HslV is capped on each side by a ring-shaped HslU homohexamer. The assembly of the HslU/HslV complex is dependent on binding of ATP.

Its subcellular location is the cytoplasm. It carries out the reaction ATP-dependent cleavage of peptide bonds with broad specificity.. With respect to regulation, allosterically activated by HslU binding. Its function is as follows. Protease subunit of a proteasome-like degradation complex believed to be a general protein degrading machinery. This is ATP-dependent protease subunit HslV from Anaeromyxobacter sp. (strain Fw109-5).